Here is a 206-residue protein sequence, read N- to C-terminus: Recombination protein RecR (206 aa).

The C4-type zinc-finger motif lies at Cys58 to Cys73. One can recognise a Toprim domain in the interval Ser81–Pro178.

It belongs to the RecR family.

In terms of biological role, may play a role in DNA repair. It seems to be involved in an RecBC-independent recombinational process of DNA repair. It may act with RecF and RecO. The sequence is that of Recombination protein RecR from Phytoplasma mali (strain AT).